A 353-amino-acid chain; its full sequence is Quinolinate synthase (353 aa).

Iminosuccinate-binding residues include H47 and S68. Position 113 (C113) interacts with [4Fe-4S] cluster. Iminosuccinate is bound by residues 139 to 141 (YAN) and S156. C200 contributes to the [4Fe-4S] cluster binding site. Iminosuccinate-binding positions include 226–228 (HPE) and T243. A [4Fe-4S] cluster-binding site is contributed by C297.

It belongs to the quinolinate synthase family. Type 1 subfamily. The cofactor is [4Fe-4S] cluster.

Its subcellular location is the cytoplasm. The enzyme catalyses iminosuccinate + dihydroxyacetone phosphate = quinolinate + phosphate + 2 H2O + H(+). The protein operates within cofactor biosynthesis; NAD(+) biosynthesis; quinolinate from iminoaspartate: step 1/1. Functionally, catalyzes the condensation of iminoaspartate with dihydroxyacetone phosphate to form quinolinate. The protein is Quinolinate synthase of Yersinia pestis bv. Antiqua (strain Antiqua).